The chain runs to 333 residues: UDP-N-acetylenolpyruvoylglucosamine reductase (333 aa).

The FAD-binding PCMH-type domain maps to 12 to 176 (LPAQCRALIE…TSVVFRLPKD (165 aa)). The active site involves Arg153. The Proton donor role is filled by Ser221. Residue Glu317 is part of the active site.

This sequence belongs to the MurB family. The cofactor is FAD.

It localises to the cytoplasm. It catalyses the reaction UDP-N-acetyl-alpha-D-muramate + NADP(+) = UDP-N-acetyl-3-O-(1-carboxyvinyl)-alpha-D-glucosamine + NADPH + H(+). Its pathway is cell wall biogenesis; peptidoglycan biosynthesis. Functionally, cell wall formation. This Idiomarina loihiensis (strain ATCC BAA-735 / DSM 15497 / L2-TR) protein is UDP-N-acetylenolpyruvoylglucosamine reductase.